A 193-amino-acid polypeptide reads, in one-letter code: MTSKCSKWHEQPLINPLTNRKIKKNGPTYKELERECGPPPRRSSPRRSSPRRSPRRSSPRRSSPRRSSPRRSSPRRSNQRIQLYCGNNARDEGLINGTKTLGTRYQCLKKGIGKGLNEPILKYNNDYEPIENVRIYCGNGALPNNKDRFGTRDECLRKGFAVGQKQKYIRDGGIQRGPIVVEENGWYKAYLPR.

A disordered region spans residues 1 to 84 (MTSKCSKWHE…RRSNQRIQLY (84 aa)). Basic residues predominate over residues 43 to 78 (SSPRRSSPRRSPRRSSPRRSSPRRSSPRRSSPRRSN).

Belongs to the IIV-6 378R family.

This is an uncharacterized protein from Invertebrate iridescent virus 6 (IIV-6).